Here is a 137-residue protein sequence, read N- to C-terminus: Small ribosomal subunit protein uS12 (137 aa).

Disordered stretches follow at residues 1 to 21 and 33 to 57; these read MPTI…KSDS and KVQT…TPKK.

It belongs to the universal ribosomal protein uS12 family. Part of the 30S ribosomal subunit. Contacts proteins S8 and S17. May interact with IF1 in the 30S initiation complex.

Its function is as follows. With S4 and S5 plays an important role in translational accuracy. Interacts with and stabilizes bases of the 16S rRNA that are involved in tRNA selection in the A site and with the mRNA backbone. Located at the interface of the 30S and 50S subunits, it traverses the body of the 30S subunit contacting proteins on the other side and probably holding the rRNA structure together. The combined cluster of proteins S8, S12 and S17 appears to hold together the shoulder and platform of the 30S subunit. In Streptococcus pyogenes serotype M1, this protein is Small ribosomal subunit protein uS12.